We begin with the raw amino-acid sequence, 583 residues long: ATP-dependent lipid A-core flippase (583 aa).

7 helical membrane-spanning segments follow: residues 18 to 38, 65 to 85, 105 to 127, 143 to 163, 167 to 187, 252 to 272, and 277 to 297; these read LWPIINPFKIGLIIASITLII, IFMWMPLVLMGLMIMRGMSGF, LLFNHIMNMPVSFFIEQSTATLM, GALITIIREGASVVGLCIMMF, WQLSLVLILIMPIISIIIKLV, VFEPLIQFVASLALACVLYIA, and VIEMLSAGTITVIFSSMIALM. The ABC transmembrane type-1 domain maps to 30–312; it reads IIASITLIIN…LTNVSAQFQR (283 aa). Residues 344-580 enclose the ABC transporter domain; the sequence is IIFDNVTFFY…KGVYSQLYKF (237 aa). ATP is bound at residue 378-385; the sequence is GRSGSGKS.

The protein belongs to the ABC transporter superfamily. Lipid exporter (TC 3.A.1.106) family. Homodimer.

The protein localises to the cell inner membrane. The catalysed reaction is ATP + H2O + lipid A-core oligosaccharideSide 1 = ADP + phosphate + lipid A-core oligosaccharideSide 2.. Involved in lipopolysaccharide (LPS) biosynthesis. Translocates lipid A-core from the inner to the outer leaflet of the inner membrane. Transmembrane domains (TMD) form a pore in the inner membrane and the ATP-binding domain (NBD) is responsible for energy generation. In Blochmanniella floridana, this protein is ATP-dependent lipid A-core flippase.